The primary structure comprises 72 residues: UPF0352 protein SO_2176 (72 aa).

It belongs to the UPF0352 family.

The chain is UPF0352 protein SO_2176 from Shewanella oneidensis (strain ATCC 700550 / JCM 31522 / CIP 106686 / LMG 19005 / NCIMB 14063 / MR-1).